The sequence spans 1147 residues: ATP-dependent helicase/deoxyribonuclease subunit B (1147 aa).

Residue 8–15 (GRAGSGKS) participates in ATP binding. [4Fe-4S] cluster contacts are provided by cysteine 786, cysteine 1106, cysteine 1109, and cysteine 1115.

This sequence belongs to the helicase family. AddB/RexB type 1 subfamily. In terms of assembly, heterodimer of AddA and AddB. Mg(2+) serves as cofactor. It depends on [4Fe-4S] cluster as a cofactor.

Functionally, the heterodimer acts as both an ATP-dependent DNA helicase and an ATP-dependent, dual-direction single-stranded exonuclease. Recognizes the chi site generating a DNA molecule suitable for the initiation of homologous recombination. The AddB subunit has 5' -&gt; 3' nuclease activity but not helicase activity. The protein is ATP-dependent helicase/deoxyribonuclease subunit B of Clostridium botulinum (strain Loch Maree / Type A3).